Consider the following 355-residue polypeptide: Cyanide hydratase (355 aa).

The 281-residue stretch at 6–286 (YKAAAVTSEP…GLLFVDIDLN (281 aa)) folds into the CN hydrolase domain. The active-site Proton acceptor is Glu-46. Residue Lys-128 is part of the active site. Cys-163 serves as the catalytic Nucleophile.

This sequence belongs to the carbon-nitrogen hydrolase superfamily. Nitrilase family. In terms of assembly, oligomer of dimers, forming left-handed helical fibers.

It carries out the reaction formamide = hydrogen cyanide + H2O. Its function is as follows. Catalyzes the hydration of cyanide to formamide. Degradation of cyanide may be important for plant pathogenic fungi in infection of cyanogenic plants. Also has low but significant nitrilase activity with acetonitrile, propionitrile and benzonitrile. In Gibberella baccata (Fusarium lateritium), this protein is Cyanide hydratase.